The sequence spans 401 residues: Adenosine 3'-phospho 5'-phosphosulfate transporter 2 (401 aa).

Residues Asn12 and Asn71 are each glycosylated (N-linked (GlcNAc...) asparagine). Transmembrane regions (helical) follow at residues 78–98 (LTQFFICVAGVFVFYLIYGYL), 114–134 (YLTLVQFAFYSIFGLIELQLI), 147–167 (MIIAFLTVGTMGLSNTSLGYL), 170–190 (PTQVIFKCCKLIPVMLGGVFI), 196–216 (NVADVSAAICMSLGLIWFTLA), and 223–243 (NFNLTGVVLISLALCADAVIG). An N-linked (GlcNAc...) asparagine glycan is attached at Asn254. Transmembrane regions (helical) follow at residues 267–287 (IGFVYILLGLTCTSGLGPAVT), 298–317 (GYAFLFSLTGYFGISFVLAL), 324–346 (LIAVTVTTGRKAMTIVLSFIFFA), and 349–369 (FTFQYVWSGLLVVLGIFLNVY).

The protein belongs to the nucleotide-sugar transporter family. SLC35B subfamily. In terms of tissue distribution, preferentially and highly expressed in colon.

The protein resides in the golgi apparatus membrane. It carries out the reaction 3'-phosphoadenylyl sulfate(in) + adenosine 3',5'-bisphosphate(out) = 3'-phosphoadenylyl sulfate(out) + adenosine 3',5'-bisphosphate(in). In terms of biological role, probably functions as a 3'-phosphoadenylyl sulfate:adenosine 3',5'-bisphosphate antiporter at the Golgi membranes. Mediates the transport from the cytosol into the lumen of the Golgi of 3'-phosphoadenylyl sulfate/adenosine 3'-phospho 5'-phosphosulfate (PAPS), a universal sulfuryl donor for sulfation events that take place in that compartment. This is Adenosine 3'-phospho 5'-phosphosulfate transporter 2 from Homo sapiens (Human).